Here is a 634-residue protein sequence, read N- to C-terminus: GTP-binding protein 4 (634 aa).

The residue at position 2 (Ala2) is an N-acetylalanine. Lys103 bears the N6-acetyllysine; alternate mark. Lys103 is covalently cross-linked (Glycyl lysine isopeptide (Lys-Gly) (interchain with G-Cter in SUMO2); alternate). Residue Ser122 is modified to Phosphoserine. The OBG-type G domain occupies 169-340 (RTLLLCGYPN…VKTEACDRLL (172 aa)). Residues 175–182 (GYPNVGKS), 221–225 (DTPGI), and 289–292 (NKCD) each bind GTP. A Glycyl lysine isopeptide (Lys-Gly) (interchain with G-Cter in SUMO2) cross-link involves residue Lys332. Ser468, Ser470, and Ser472 each carry phosphoserine. The tract at residues 494–634 (KILQSKEKNK…KRKAGKKDRR (141 aa)) is disordered. Lys534 is covalently cross-linked (Glycyl lysine isopeptide (Lys-Gly) (interchain with G-Cter in SUMO2)). The span at 544-554 (RRSRSVTRKRK) shows a compositional bias: basic residues. Ser558 carries the phosphoserine modification. The segment covering 560-572 (PPSSTARSRSCSR) has biased composition (low complexity). Over residues 573 to 585 (TPRDVSGLRDVKM) the composition is skewed to basic and acidic residues. Basic residues predominate over residues 586-604 (VKKAKTMMKKAQKKMNRLG). Residues 605–618 (KKGEADRHVFDMKP) are compositionally biased toward basic and acidic residues. A compositionally biased stretch (basic residues) spans 619-634 (KHLLSGKRKAGKKDRR).

It belongs to the TRAFAC class OBG-HflX-like GTPase superfamily. OBG GTPase family. NOG subfamily. In terms of assembly, associates with pre-60S ribosomal particles. Interacts with MINAS-60 (product of an alternative open reading frame of RBM10). In terms of tissue distribution, ubiquitous.

It is found in the nucleus. The protein resides in the nucleolus. Functionally, involved in the biogenesis of the 60S ribosomal subunit. Acts as TP53 repressor, preventing TP53 stabilization and cell cycle arrest. The sequence is that of GTP-binding protein 4 (Gtpbp4) from Mus musculus (Mouse).